Here is a 691-residue protein sequence, read N- to C-terminus: DNA ligase (691 aa).

Residues 41 to 45 (DAEYD), 90 to 91 (SL), and E130 each bind NAD(+). K132 acts as the N6-AMP-lysine intermediate in catalysis. 4 residues coordinate NAD(+): R153, E190, K307, and K331. C425, C428, C443, and C449 together coordinate Zn(2+). Residues 610-691 (APQGVLAGKT…LHQLLEGNTP (82 aa)) enclose the BRCT domain.

Belongs to the NAD-dependent DNA ligase family. LigA subfamily. It depends on Mg(2+) as a cofactor. Requires Mn(2+) as cofactor.

The enzyme catalyses NAD(+) + (deoxyribonucleotide)n-3'-hydroxyl + 5'-phospho-(deoxyribonucleotide)m = (deoxyribonucleotide)n+m + AMP + beta-nicotinamide D-nucleotide.. In terms of biological role, DNA ligase that catalyzes the formation of phosphodiester linkages between 5'-phosphoryl and 3'-hydroxyl groups in double-stranded DNA using NAD as a coenzyme and as the energy source for the reaction. It is essential for DNA replication and repair of damaged DNA. This chain is DNA ligase, found in Burkholderia cenocepacia (strain HI2424).